The chain runs to 141 residues: Large ribosomal subunit protein uL13 (141 aa).

It belongs to the universal ribosomal protein uL13 family. In terms of assembly, part of the 50S ribosomal subunit.

Functionally, this protein is one of the early assembly proteins of the 50S ribosomal subunit, although it is not seen to bind rRNA by itself. It is important during the early stages of 50S assembly. This Deinococcus deserti (strain DSM 17065 / CIP 109153 / LMG 22923 / VCD115) protein is Large ribosomal subunit protein uL13.